The following is a 471-amino-acid chain: N(6)-adenine-specific methyltransferase METTL4 (471 aa).

It belongs to the MT-A70-like family.

Its subcellular location is the nucleus. The enzyme catalyses a 2'-O-methyladenosine in U2 snRNA + S-adenosyl-L-methionine = an N(6)-methyl-2'-O-methyladenosine in U2 snRNA + S-adenosyl-L-homocysteine + H(+). It carries out the reaction a 2'-deoxyadenosine in DNA + S-adenosyl-L-methionine = an N(6)-methyl-2'-deoxyadenosine in DNA + S-adenosyl-L-homocysteine + H(+). N(6)-adenine-specific methyltransferase that can methylate both RNAs and DNA. Acts as a N(6)-adenine-specific RNA methyltransferase by catalyzing formation of N6,2'-O-dimethyladenosine (m6A(m)) on internal positions of U2 small nuclear RNA (snRNA): methylates the 6th position of adenine residues with a pre-deposited 2'-O-methylation. Internal m6A(m) methylation of snRNAs regulates RNA splicing. Also able to act as a N(6)-adenine-specific DNA methyltransferase by mediating methylation of DNA on the 6th position of adenine (N(6)-methyladenosine). The existence of N(6)-methyladenosine (m6A) on DNA is however unclear in mammals, and additional evidences are required to confirm the role of the N(6)-adenine-specific DNA methyltransferase activity of METTL4 in vivo. Acts as a regulator of mitochondrial transcript levels and mitochondrial DNA (mtDNA) copy number by mediating mtDNA N(6)-methylation: m6A on mtDNA reduces transcription by repressing TFAM DNA-binding and bending. N(6)-methyladenosine deposition by METTL4 regulates Polycomb silencing by triggering ubiquitination and degradation of sensor proteins ASXL1 and MPND, leading to inactivation of the PR-DUB complex and subsequent preservation of Polycomb silencing. This is N(6)-adenine-specific methyltransferase METTL4 from Mus musculus (Mouse).